A 751-amino-acid chain; its full sequence is Photosystem I P700 chlorophyll a apoprotein A1 (751 aa).

The next 8 membrane-spanning stretches (helical) occupy residues 73–96, 159–182, 198–222, 294–312, 349–372, 388–414, 436–458, and 533–551; these read VFSA…FHGA, LYST…WHYH, MNHH…HIAL, MAHH…GHQY, WHAQ…HHMY, LSLF…IFMV, AIIS…LYIH, and FMVH…LILL. 2 residues coordinate [4Fe-4S] cluster: cysteine 575 and cysteine 584. Helical transmembrane passes span 591–612 and 665–687; these read HVFL…HFSW and LSAY…MFLF. Residue histidine 676 participates in chlorophyll a' binding. 2 residues coordinate chlorophyll a: methionine 684 and tyrosine 692. Tryptophan 693 is a binding site for phylloquinone. A helical membrane pass occupies residues 725 to 745; sequence AVGVAHYLLGGIATTWSFFLA.

Belongs to the PsaA/PsaB family. The PsaA/B heterodimer binds the P700 chlorophyll special pair and subsequent electron acceptors. PSI consists of a core antenna complex that captures photons, and an electron transfer chain that converts photonic excitation into a charge separation. The eukaryotic PSI reaction center is composed of at least 11 subunits. The cofactor is P700 is a chlorophyll a/chlorophyll a' dimer, A0 is one or more chlorophyll a, A1 is one or both phylloquinones and FX is a shared 4Fe-4S iron-sulfur center..

The protein resides in the plastid. Its subcellular location is the chloroplast thylakoid membrane. It catalyses the reaction reduced [plastocyanin] + hnu + oxidized [2Fe-2S]-[ferredoxin] = oxidized [plastocyanin] + reduced [2Fe-2S]-[ferredoxin]. Functionally, psaA and PsaB bind P700, the primary electron donor of photosystem I (PSI), as well as the electron acceptors A0, A1 and FX. PSI is a plastocyanin/cytochrome c6-ferredoxin oxidoreductase, converting photonic excitation into a charge separation, which transfers an electron from the donor P700 chlorophyll pair to the spectroscopically characterized acceptors A0, A1, FX, FA and FB in turn. Oxidized P700 is reduced on the lumenal side of the thylakoid membrane by plastocyanin or cytochrome c6. This chain is Photosystem I P700 chlorophyll a apoprotein A1, found in Ostreococcus tauri.